An 859-amino-acid chain; its full sequence is Rod cGMP-specific 3',5'-cyclic phosphodiesterase subunit alpha (859 aa).

Gly2 is modified (N-acetylglycine). GAF domains are found at residues 73 to 222 (QAEK…NLIM) and 254 to 431 (DIER…GWSV). In terms of domain architecture, PDEase spans 483–816 (EEEELAEILQ…KEWKALADEY (334 aa)). His559 (proton donor) is an active-site residue. Positions 563, 599, 600, and 720 each coordinate a divalent metal cation. Residues 823 to 859 (LEEEKQKQQAAKQAASGNQPGGNPLQGAPASKSCCIQ) are disordered. Cys856 is modified (cysteine methyl ester). Residue Cys856 is the site of S-farnesyl cysteine attachment. Residues 857–859 (CIQ) constitute a propeptide, removed in mature form.

Belongs to the cyclic nucleotide phosphodiesterase family. In terms of assembly, oligomer composed of two catalytic chains (alpha and beta), an inhibitory chain (gamma) and the delta chain. A divalent metal cation serves as cofactor.

It localises to the cell membrane. The protein localises to the cell projection. It is found in the cilium. Its subcellular location is the photoreceptor outer segment. It carries out the reaction 3',5'-cyclic GMP + H2O = GMP + H(+). In terms of biological role, rod-specific cGMP phosphodiesterase that catalyzes the hydrolysis of 3',5'-cyclic GMP. This protein participates in processes of transmission and amplification of the visual signal. The chain is Rod cGMP-specific 3',5'-cyclic phosphodiesterase subunit alpha from Mus musculus (Mouse).